The following is a 364-amino-acid chain: Long-wave-sensitive opsin 1 (364 aa).

Over 1 to 52 the chain is Extracellular; it reads MAHAWGPQRLAGGQPQANFEESTQGSIFTYTNSNSTRDPFEGPNYHIAPRWV. A glycan (O-linked (GlcNAc) serine) is linked at Ser-22. Residue Asn-34 is glycosylated (N-linked (GlcNAc...) asparagine). A helical transmembrane segment spans residues 53-77; sequence YHLTSAWMVFVVIASVFTNGLVLAA. Residues 78–89 are Cytoplasmic-facing; sequence TMRFKKLRHPLN. A helical membrane pass occupies residues 90–115; the sequence is WILVNLAIADLAETIIASTISVVNQM. At 116 to 129 the chain is on the extracellular side; sequence YGYFVLGHPLCVVE. A disulfide bridge links Cys-126 with Cys-203. The chain crosses the membrane as a helical span at residues 130–149; that stretch reads GYTVSLCGITGLWSLAIISW. Residues 150–168 are Cytoplasmic-facing; that stretch reads ERWMVVCKPFGNVRFDAKL. A helical transmembrane segment spans residues 169–192; that stretch reads AITGIAFSWIWAAVWTAPPIFGWS. Over 193–218 the chain is Extracellular; it reads RYWPHGLKTSCGPDVFSGSSYPGVQS. The chain crosses the membrane as a helical span at residues 219–246; that stretch reads YMIVLMITCCFIPLSVIILCYLQVWLAI. The Cytoplasmic portion of the chain corresponds to 247–268; that stretch reads RAVAKQQKESESTQKAEKEVTR. Residues 269–292 traverse the membrane as a helical segment; that stretch reads MVMVMIFAYCLCWGPYTFFACFAA. Over 293–300 the chain is Extracellular; the sequence is AHPGYAFH. A helical membrane pass occupies residues 301 to 325; sequence PLVAALPAYFAKSATIYNPIIYVFM. N6-(retinylidene)lysine is present on Lys-312. The Cytoplasmic portion of the chain corresponds to 326 to 364; it reads NRQFRNCILQLFGKKVDDSSELSSVSKTEASSVSSVSPA.

Belongs to the G-protein coupled receptor 1 family. Opsin subfamily. Phosphorylated on some or all of the serine and threonine residues present in the C-terminal region. As to expression, expressed in retina (at protein level). Expressed in cone and/or rod photoreceptor cells (at protein level).

It localises to the membrane. In terms of biological role, visual pigments are the light-absorbing molecules that mediate vision. They consist of an apoprotein, opsin, covalently linked to cis-retinal. The chain is Long-wave-sensitive opsin 1 (OPN1LW) from Bos taurus (Bovine).